Consider the following 92-residue polypeptide: Small ribosomal subunit protein uS19 (92 aa).

It belongs to the universal ribosomal protein uS19 family.

Protein S19 forms a complex with S13 that binds strongly to the 16S ribosomal RNA. The protein is Small ribosomal subunit protein uS19 of Corynebacterium urealyticum (strain ATCC 43042 / DSM 7109).